The following is an 83-amino-acid chain: MNKAPINLQDTFLNQVRKENMPVTIYLVNGFQLKGLVRGFDNFTVVIEFEGKQQMVYKHAISTVMPLRPINLVAASQSSTEER.

The Sm domain maps to 10-70 (DTFLNQVRKE…ISTVMPLRPI (61 aa)).

The protein belongs to the Hfq family. Homohexamer.

RNA chaperone that binds small regulatory RNA (sRNAs) and mRNAs to facilitate mRNA translational regulation in response to envelope stress, environmental stress and changes in metabolite concentrations. Also binds with high specificity to tRNAs. This chain is RNA-binding protein Hfq, found in Desulfitobacterium hafniense (strain DSM 10664 / DCB-2).